Here is a 503-residue protein sequence, read N- to C-terminus: Cytochrome P450 11B2, mitochondrial (503 aa).

The N-terminal 24 residues, M1 to L24, are a transit peptide targeting the mitochondrion. F381 serves as a coordination point for 21-hydroxyprogesterone. C450 provides a ligand contact to heme.

It belongs to the cytochrome P450 family. Heme serves as cofactor. Expressed sporadically in the zona glomerulosa (zG) of the adrenal cortex (conventional zonation), as well as in aldosterone-producing cell clusters (APCCs) composed of morphological zG cells in contact with the capsule (variegated zonation).

It is found in the mitochondrion inner membrane. It carries out the reaction a steroid + 2 reduced [adrenodoxin] + O2 + 2 H(+) = an 11beta-hydroxysteroid + 2 oxidized [adrenodoxin] + H2O. The catalysed reaction is 21-hydroxyprogesterone + 2 reduced [adrenodoxin] + O2 + 2 H(+) = corticosterone + 2 oxidized [adrenodoxin] + H2O. The enzyme catalyses corticosterone + 2 reduced [adrenodoxin] + O2 + 2 H(+) = 18-hydroxycorticosterone + 2 oxidized [adrenodoxin] + H2O. It catalyses the reaction 18-hydroxycorticosterone + 2 reduced [adrenodoxin] + O2 + 2 H(+) = aldosterone + 2 oxidized [adrenodoxin] + 2 H2O. It carries out the reaction 11-deoxycortisol + 2 reduced [adrenodoxin] + O2 + 2 H(+) = cortisol + 2 oxidized [adrenodoxin] + H2O. The catalysed reaction is 21-hydroxyprogesterone + 2 reduced [adrenodoxin] + O2 + 2 H(+) = 18-hydroxy-11-deoxycorticosterone + 2 oxidized [adrenodoxin] + H2O. The enzyme catalyses cortisol + 2 reduced [adrenodoxin] + O2 + 2 H(+) = 18-hydroxycortisol + 2 oxidized [adrenodoxin] + H2O. It catalyses the reaction 18-hydroxycortisol + 2 reduced [adrenodoxin] + O2 + 2 H(+) = 18-oxocortisol + 2 oxidized [adrenodoxin] + 2 H2O. The protein operates within steroid biosynthesis. A cytochrome P450 monooxygenase that catalyzes the biosynthesis of aldosterone, the main mineralocorticoid in the human body responsible for salt and water homeostasis, thus involved in blood pressure regulation, arterial hypertension, and the development of heart failure. Catalyzes three sequential oxidative reactions of 11-deoxycorticosterone (21-hydroxyprogesterone), namely 11-beta hydroxylation, followed by two successive oxidations at C18 yielding 18-hydroxy and then 18-oxo intermediates (that would not leave the enzyme active site during the consecutive hydroxylation reactions), ending with the formation of aldosterone. Can also produce 18-hydroxycortisol and 18-oxocortisol, derived from successive oxidations of cortisol at C18, normally found at very low levels, but significantly increased in primary aldosteronism, the most common form of secondary hypertension. Mechanistically, uses molecular oxygen inserting one oxygen atom into a substrate and reducing the second into a water molecule. Two electrons are provided by NADPH via a two-protein mitochondrial transfer system comprising flavoprotein FDXR (adrenodoxin/ferredoxin reductase) and nonheme iron-sulfur protein FDX1 or FDX2 (adrenodoxin/ferredoxin). Could also be involved in the androgen metabolic pathway. The sequence is that of Cytochrome P450 11B2, mitochondrial from Homo sapiens (Human).